A 353-amino-acid chain; its full sequence is Protein RecA (353 aa).

80–87 contacts ATP; it reads GPESSGKT.

It belongs to the RecA family.

It is found in the cytoplasm. Functionally, can catalyze the hydrolysis of ATP in the presence of single-stranded DNA, the ATP-dependent uptake of single-stranded DNA by duplex DNA, and the ATP-dependent hybridization of homologous single-stranded DNAs. It interacts with LexA causing its activation and leading to its autocatalytic cleavage. This is Protein RecA from Chlorobium chlorochromatii (strain CaD3).